A 559-amino-acid chain; its full sequence is Glucose-6-phosphate isomerase 4 (559 aa).

The active-site Proton donor is the E356. Residues H387 and K513 contribute to the active site.

The protein belongs to the GPI family.

It localises to the cytoplasm. It carries out the reaction alpha-D-glucose 6-phosphate = beta-D-fructose 6-phosphate. It functions in the pathway carbohydrate biosynthesis; gluconeogenesis. It participates in carbohydrate degradation; glycolysis; D-glyceraldehyde 3-phosphate and glycerone phosphate from D-glucose: step 2/4. In terms of biological role, catalyzes the reversible isomerization of glucose-6-phosphate to fructose-6-phosphate. In Rhodococcus jostii (strain RHA1), this protein is Glucose-6-phosphate isomerase 4.